We begin with the raw amino-acid sequence, 232 residues long: 2,3,4,5-tetrahydropyridine-2,6-dicarboxylate N-acetyltransferase (232 aa).

Belongs to the transferase hexapeptide repeat family. DapH subfamily.

It carries out the reaction (S)-2,3,4,5-tetrahydrodipicolinate + acetyl-CoA + H2O = L-2-acetamido-6-oxoheptanedioate + CoA. Its pathway is amino-acid biosynthesis; L-lysine biosynthesis via DAP pathway; LL-2,6-diaminopimelate from (S)-tetrahydrodipicolinate (acetylase route): step 1/3. In terms of biological role, catalyzes the transfer of an acetyl group from acetyl-CoA to tetrahydrodipicolinate. The polypeptide is 2,3,4,5-tetrahydropyridine-2,6-dicarboxylate N-acetyltransferase (Streptococcus sanguinis (strain SK36)).